Here is a 254-residue protein sequence, read N- to C-terminus: Ribosomal RNA small subunit methyltransferase G (254 aa).

Residues Gly92, 143–144, and Arg156 contribute to the S-adenosyl-L-methionine site; that span reads AE.

The protein belongs to the methyltransferase superfamily. RNA methyltransferase RsmG family.

Its subcellular location is the cytoplasm. Functionally, specifically methylates the N7 position of a guanine in 16S rRNA. This is Ribosomal RNA small subunit methyltransferase G from Leptospira interrogans serogroup Icterohaemorrhagiae serovar copenhageni (strain Fiocruz L1-130).